Consider the following 99-residue polypeptide: Small ribosomal subunit protein uS19c (99 aa).

Belongs to the universal ribosomal protein uS19 family.

It localises to the plastid. The protein resides in the chloroplast. Its function is as follows. Protein S19 forms a complex with S13 that binds strongly to the 16S ribosomal RNA. The chain is Small ribosomal subunit protein uS19c from Oenothera biennis (German evening primrose).